Here is a 101-residue protein sequence, read N- to C-terminus: Small ribosomal subunit protein uS14 (101 aa).

Belongs to the universal ribosomal protein uS14 family. In terms of assembly, part of the 30S ribosomal subunit. Contacts proteins S3 and S10.

Functionally, binds 16S rRNA, required for the assembly of 30S particles and may also be responsible for determining the conformation of the 16S rRNA at the A site. The chain is Small ribosomal subunit protein uS14 from Bartonella quintana (strain Toulouse) (Rochalimaea quintana).